Reading from the N-terminus, the 207-residue chain is Small ribosomal subunit protein uS4 (207 aa).

The interval 26-53 (KPFDVKTKKHAKAPGQHGQARGKQSEYS) is disordered. The S4 RNA-binding domain occupies 97–159 (SRLDNVVYRM…AKQQLRIKNA (63 aa)).

This sequence belongs to the universal ribosomal protein uS4 family. In terms of assembly, part of the 30S ribosomal subunit. Contacts protein S5. The interaction surface between S4 and S5 is involved in control of translational fidelity.

Its function is as follows. One of the primary rRNA binding proteins, it binds directly to 16S rRNA where it nucleates assembly of the body of the 30S subunit. In terms of biological role, with S5 and S12 plays an important role in translational accuracy. The polypeptide is Small ribosomal subunit protein uS4 (Acinetobacter baylyi (strain ATCC 33305 / BD413 / ADP1)).